The sequence spans 852 residues: MYALLVFVERYSECKPVSESSSSTSLSAMGLPHGNKTSDVNSAAGSVPTTLAIASTSTILTTSQNVSGSTRLSLTQSQDFPTSTPVNCKKATESDTTPVVFVRRGPMDRNRGAGKDERNDLSVIKERVLNAVSDQSLSGYRSVTNKTGNSPKSMPNDLVTLTDVPDEYRTHLLWEYYKVDGDKVPRAEIAAMPLLSQESMLLDELLHCLTGIRESLLVPQKPIISAVGLAKYDTDFDIHTHLDRSLTHQVREILPLASYFMGVQKIIAATDGLGQVMNSLNEALQELTHDFYLIIVQAEQELRHNRLTLQKLLYYLQPTMWVMHEVWSSLVIIQLSDSRDAEVLTYLHERIKRLEGNKDAQQLIIGLVRKAAKPYMRMLQMWIQKGVIVDRHREFLVVDNEVIHRDELPEHYSDDYWERRYTLRDEQIPSFLAKYSDKILRTGKYLNVIRQCGKRVMPTQEMNLEFDPTSERHVSVINDAYYFAARMLLDVLLTENDLMGHLQSVKRYLLLNQGDFTMQFMDACEDELTKNVDHVLPMTLENLLGLTLRISSARNDPYKDDLHCELLPYDLVTQMSKIMKKEENWQAQPRLDLSGLECFAFTYEVKWPCSLVLNHISISKYQMLFRQLFYCKHVERQLCKIWKENSIARQFEPQAASLYRAAFTLRQRMMNAIQNLEYYMMIEIIEPNWHIFIEKMKTVENVDNVLRLHQDFLDSCLKNCMLTESSHLNRSIFKLCKICLKYCEFIQITQRYFQDAELRSMVRDSADSSESEQESLHCPQIETPLDPTDTFSERVRRFDLEFTQLLISFLKQINSMAKKNTADCFMNLVHRINFNAFYTDQMDKMCVEDAIG.

Serine 73 is modified (phosphoserine).

This sequence belongs to the TUBGCP family. Gamma-tubulin small complex (Gamma TuSC) is a heterotetrameric complex which contains two molecules of gamma-tubulin, and one molecule each of Dgrip84 and Dgrip91. The gamma-tubulin in this complex binds preferentially to GDP over GTP.

Its subcellular location is the cytoplasm. It is found in the cytoskeleton. The protein resides in the microtubule organizing center. It localises to the centrosome. The protein localises to the perinuclear region. The protein is Gamma-tubulin complex component 2 homolog (Grip84) of Drosophila melanogaster (Fruit fly).